The following is a 1502-amino-acid chain: Nucleoporin NUP170 (1502 aa).

The segment at 1 to 31 is disordered; it reads MFQSFFHNNGPAAAGETFSDSRSYPLTNHQE. Positions 18-30 are enriched in polar residues; sequence FSDSRSYPLTNHQ. The interval 233–261 is leucine-zipper; sequence LISTTMELFMFAISLDKATNELSVFNTHL. Phosphoserine is present on serine 1247.

This sequence belongs to the non-repetitive/WGA-negative nucleoporin family. As to quaternary structure, component of the nuclear pore complex (NPC). NPC constitutes the exclusive means of nucleocytoplasmic transport. NPCs allow the passive diffusion of ions and small molecules and the active, nuclear transport receptor-mediated bidirectional transport of macromolecules such as proteins, RNAs, ribonucleoparticles (RNPs), and ribosomal subunits across the nuclear envelope. Due to its 8-fold rotational symmetry, all subunits are present with 8 copies or multiples thereof. During mitosis NUP53 changes its binding partner within the NPC from NUP170 to NIC96, exposing a high affinity binding site for the karyopherin PSE1, and retaining it in the NPC.

The protein resides in the nucleus. The protein localises to the nuclear pore complex. It localises to the nucleus membrane. Functions as a component of the nuclear pore complex (NPC). NPC components, collectively referred to as nucleoporins (NUPs), can play the role of both NPC structural components and of docking or interaction partners for transiently associated nuclear transport factors. NUP170 probably plays an important role in NPC assembly and organization. In addition it is required for chromosome transmission fidelity. The polypeptide is Nucleoporin NUP170 (NUP170) (Saccharomyces cerevisiae (strain ATCC 204508 / S288c) (Baker's yeast)).